We begin with the raw amino-acid sequence, 1520 residues long: Myosin-5 (1520 aa).

A Myosin N-terminal SH3-like domain is found at I7–A56. Positions G59–A729 constitute a Myosin motor domain. ATP contacts are provided by residues G153–T160 and N206–K214. Actin-binding stretches follow at residues L492–F526, E528–V551, F586–L610, and L610–N632. IQ domains follow at residues L732 to V761, I755 to A784, I780 to V809, T803 to A832, Q828 to V857, and L851 to D880. A coiled-coil region spans residues T881–Q1047. A disordered region spans residues P1062–K1100. The span at F1076 to E1086 shows a compositional bias: polar residues. The region spanning N1148–D1463 is the Dilute domain.

This sequence belongs to the TRAFAC class myosin-kinesin ATPase superfamily. Myosin family. Plant myosin class XI subfamily. In terms of assembly, homodimer. Interacts with MYOB1 and MYOB2. Interacts with PHOX1.

It localises to the cytoplasm. Its function is as follows. Myosin heavy chain that is required for the cell cycle-regulated transport of various organelles and proteins for their segregation. Functions by binding with its tail domain to receptor proteins on organelles and exerting force with its N-terminal motor domain against actin filaments, thereby transporting its cargo along polarized actin cables. Contributes to the trafficking of Golgi stacks, mitochondria and peroxisomes. Required for development of pavement cells, trichomes, and stigmatic papillae. The polypeptide is Myosin-5 (XI-1) (Arabidopsis thaliana (Mouse-ear cress)).